We begin with the raw amino-acid sequence, 370 residues long: Gametogenetin-binding protein 1 (370 aa).

2 disordered regions span residues 26 to 114 (VGSK…QTLT) and 240 to 263 (PAAP…EEAV). The span at 31–49 (GSKSTNKPLTRSQPSSSWE) shows a compositional bias: polar residues. Residues 225-370 (LYKQLQKSAM…DEMGNWPPPD (146 aa)) are required for induction of mitochondrial fragmentation. Over residues 250–260 (GLPHEEKGERE) the composition is skewed to basic and acidic residues. The segment at 298 to 370 (KKFRSTDTVG…DEMGNWPPPD (73 aa)) is interaction with GGN.

Interacts with CCDC159. Interacts with isoform 1 and isoform 2 of GGN. As to expression, testis-specific. In the testis, expressed only in germ cells and not in somatic cells. Expression starts in late primary spermatocytes in stage X-XII tubules and gradually increases towards step 1-3 spermatids in stage I-III tubules. Expression then declines continuously and disappears after step 7 spermatids in stage VII tubules (at protein level).

It is found in the cytoplasm. Its subcellular location is the membrane. The protein resides in the golgi apparatus. It localises to the mitochondrion intermembrane space. In terms of biological role, induces mitochondrial fragmentation, possibly by promoting DNM1L-dependent fission and may play a role in mitochondrial morphogenesis during spermatogenesis. This chain is Gametogenetin-binding protein 1 (Ggnbp1), found in Mus musculus (Mouse).